A 1200-amino-acid polypeptide reads, in one-letter code: Chromosome partition protein Smc (1200 aa).

32-39 (PNGCGKSN) is an ATP binding site. 2 coiled-coil regions span residues 171 to 219 (VTKY…AEKY) and 252 to 342 (LENL…MSEA). The SMC hinge domain maps to 528–644 (QGIFGLVADV…QDVATARAWT (117 aa)). 2 coiled-coil regions span residues 679–706 (ALQKKREIAELATEVARVEERYNEILTR) and 735–762 (LASQEKDLHKAGEDLARVRERVRALEVE). The interval 763–795 (EGQLTQSHQALEHEEEASRGEVAHGQADREGRE) is disordered. Residues 772–795 (ALEHEEEASRGEVAHGQADREGRE) show a composition bias toward basic and acidic residues. Residues 1002–1039 (HAELSKRYDFLTAQKKDLQSSIEQLKEAIQRIDATSRE) are a coiled coil.

Belongs to the SMC family. Homodimer. Probably forms the Structural Maintenance of Chromosome (SMC) condensin-like complex with ScpA and ScpB.

It localises to the cytoplasm. In terms of biological role, a conditionally essential component of the chromosome segregation machinery. Required for chromosome condensation and partitioning. Important for positioning of ParB-parS complexes (ori of replication) and of the ter replication site, as well as for segration of the ParB-parS complex and thus chromosome segregation. May act via the formation of a condensin-like complex containing Smc, ScpA and ScpB that pulls DNA away from mid-cell into both cell halves. In Myxococcus xanthus (strain DK1622), this protein is Chromosome partition protein Smc.